The chain runs to 432 residues: Adenylosuccinate synthetase (432 aa).

GTP-binding positions include 13–19 (GDEGKGK) and 41–43 (GHT). Catalysis depends on aspartate 14, which acts as the Proton acceptor. Residues aspartate 14 and glycine 41 each coordinate Mg(2+). IMP-binding positions include 14-17 (DEGK), 39-42 (NAGH), threonine 130, arginine 144, glutamine 225, threonine 240, and arginine 304. The Proton donor role is filled by histidine 42. Residue 300–306 (ATTGRKR) participates in substrate binding. Residues arginine 306, 332-334 (KLD), and 415-417 (STG) contribute to the GTP site.

It belongs to the adenylosuccinate synthetase family. As to quaternary structure, homodimer. Mg(2+) serves as cofactor.

The protein resides in the cytoplasm. The catalysed reaction is IMP + L-aspartate + GTP = N(6)-(1,2-dicarboxyethyl)-AMP + GDP + phosphate + 2 H(+). The protein operates within purine metabolism; AMP biosynthesis via de novo pathway; AMP from IMP: step 1/2. Functionally, plays an important role in the de novo pathway of purine nucleotide biosynthesis. Catalyzes the first committed step in the biosynthesis of AMP from IMP. This Vibrio cholerae serotype O1 (strain ATCC 39541 / Classical Ogawa 395 / O395) protein is Adenylosuccinate synthetase.